A 156-amino-acid polypeptide reads, in one-letter code: Movement protein P17 (156 aa).

Residues 38-54 form a homodimerization region; it reads AEDAEEEAIAAQEELEF. Disordered regions lie at residues 55 to 80 and 106 to 156; these read PEDEAQARHSCLQRTTSWATPKEVSP and ASYF…IKRG. The RNA-binding stretch occupies residues 57–156; the sequence is DEAQARHSCL…RAAPKLIKRG (100 aa). Residues Ser71, Ser79, Ser137, and Ser140 each carry the phosphoserine modification. The segment covering 144 to 156 has biased composition (basic residues); the sequence is KLRRAAPKLIKRG.

Belongs to the polerovirus movement protein family. Homodimer. Expressed as a nonphosphorylated 20kDa form and a phosphorylated 22kDa form. Phosphorylated by a host PKC-related kinase. Serine phosphorylation is required for plamodesma targeting.

It is found in the host cell junction. The protein localises to the host plasmodesma. It localises to the host chloroplast envelope. The protein resides in the host Golgi apparatus. Its subcellular location is the host mitochondrion outer membrane. In terms of biological role, together with movement protein P3a, facilitates long-distance movement of virions in host. Transports viral genome to neighboring plant cells directly through plasmosdesmata, without any budding. The movement protein allows efficient cell to cell propagation, by bypassing the host cell wall barrier. Binds ssRNA. The sequence is that of Movement protein P17 from Potato leafroll virus (strain Potato/Canada/Rowhani/1979) (PLrV).